A 486-amino-acid polypeptide reads, in one-letter code: MAWAPPGERLREDARCPVCLDFLQEPVSVDCGHSFCLRCISEFCEKSDGAQGGVYACPQCRGPFRPSGFRPNRQLAGLVESVRRLGLGAGPGARRCARHGEDLSRFCEEDEAALCWVCDAGPEHRTHRTAPLQEAAGSYQVKLQMALELMRKELEDALTQEANVGKKTVIWKEKVEMQRQRFRLEFEKHRGFLAQEEQRQLRRLEAEERATLQRLRESKSRLVQQSKALKELADELQERCQRPALGLLEGVRGVLSRSKAVTRLEAENIPMELKTACCIPGRRELLRKFQVDVKLDPATAHPSLLLTADLRSVQDGEPWRDVPNNPERFDTWPCILGLQSFSSGRHYWEVLVGEGAEWGLGVCQDTLPRKGETTPSPENGVWALWLLKGNEYMVLASPSVPLLQLESPRCIGIFLDYEAGEISFYNVTDGSYIYTFNQLFSGLLRPYFFICDATPLILPPTTIAGSGNWASRDHLDPASDVRDDHL.

The RING-type zinc finger occupies 16 to 61; that stretch reads CPVCLDFLQEPVSVDCGHSFCLRCISEFCEKSDGAQGGVYACPQCR. Residues 91–132 form a B box-type zinc finger; the sequence is PGARRCARHGEDLSRFCEEDEAALCWVCDAGPEHRTHRTAPL. Zn(2+) contacts are provided by Cys96, His99, Cys118, and His124. Residues 193 to 242 adopt a coiled-coil conformation; it reads LAQEEQRQLRRLEAEERATLQRLRESKSRLVQQSKALKELADELQERCQR. The B30.2/SPRY domain occupies 273–463; it reads LKTACCIPGR…TPLILPPTTI (191 aa).

This sequence belongs to the TRIM/RBCC family. Expressed in erythroblasts.

It carries out the reaction S-ubiquitinyl-[E2 ubiquitin-conjugating enzyme]-L-cysteine + [acceptor protein]-L-lysine = [E2 ubiquitin-conjugating enzyme]-L-cysteine + N(6)-ubiquitinyl-[acceptor protein]-L-lysine.. Its pathway is protein modification; protein ubiquitination. Its function is as follows. E3 ubiquitin ligase induced during late erythropoiesis. Directly binds and ubiquitinates the intermediate chain of the microtubule motor dynein (DYNC1LI1/DYNC1LI2), stimulating the degradation of the dynein holoprotein complex. May participate in the erythroblast enucleation process through regulation of nuclear polarization. The protein is E3 ubiquitin-protein ligase TRIM58 (TRIM58) of Homo sapiens (Human).